A 560-amino-acid chain; its full sequence is Vesicular glutamate transporter 1 (560 aa).

The Cytoplasmic segment spans residues 1–63 (MEFRQEEFRK…CTCFGLPRRY (63 aa)). The helical transmembrane segment at 64-84 (IIAIMSGLGFCISFGIRCNLG) threads the bilayer. At 85-116 (VAIVSMVNNSTTHRGGHVVMQKAQFNWDPETV) the chain is on the extracellular side. A helical membrane pass occupies residues 117 to 137 (GLIHGSFFWGYIVTQIPGGFI). At 138-140 (CQK) the chain is on the cytoplasmic side. A helical transmembrane segment spans residues 141–161 (FAANRVFGFAIVATSTLNMLI). Topologically, residues 162–169 (PSAARVHY) are extracellular. Residues 170 to 190 (GCVIFVRILQGLVEGVTYPAC) form a helical membrane-spanning segment. Residues 191-208 (HGIWSKWAPPLERSRLAT) are Cytoplasmic-facing. A helical membrane pass occupies residues 209 to 229 (TAFCGSYAGAVVAMPLAGVLV). Topologically, residues 230-236 (QYSGWSS) are extracellular. A helical transmembrane segment spans residues 237 to 257 (VFYVYGSFGIFWYLFWLLVSY). The Cytoplasmic portion of the chain corresponds to 258–302 (ESPALHPSISEEERKYIEDAIGESAKLMNPVTKFNTPWRRFFTSM). Residues 303 to 323 (PVYAIIVANFCRSWTFYLLLI) form a helical membrane-spanning segment. Residues 324-341 (SQPAYFEEVFGFEISKVG) are Extracellular-facing. A helical transmembrane segment spans residues 342 to 362 (LVSALPHLVMTIIVPIGGQIA). Residues 363 to 378 (DFLRSRRIMSTTNVRK) lie on the Cytoplasmic side of the membrane. The helical transmembrane segment at 379–399 (LMNCGGFGMEATLLLVVGYSH) threads the bilayer. The Extracellular segment spans residues 400-401 (SK). The chain crosses the membrane as a helical span at residues 402–422 (GVAISFLVLAVGFSGFAISGF). At 423 to 435 (NVNHLDIAPRYAS) the chain is on the cytoplasmic side. Residues 436 to 456 (ILMGISNGVGTLSGMVCPIIV) form a helical membrane-spanning segment. Topologically, residues 457–469 (GAMTKHKTREEWQ) are extracellular. The helical transmembrane segment at 470–490 (YVFLIASLVHYGGVIFYGVFA) threads the bilayer. The Cytoplasmic segment spans residues 491–560 (SGEKQPWAEP…PRPPPPVRDY (70 aa)). A disordered region spans residues 497 to 560 (WAEPEEMSEE…PRPPPPVRDY (64 aa)). Serine 504 bears the Phosphoserine mark. Over residues 520-529 (DESEMEDEAE) the composition is skewed to acidic residues. Pro residues-rich tracts occupy residues 531-540 (PGAPPAPPPS) and 550-560 (PPRPPPPVRDY).

Belongs to the major facilitator superfamily. Sodium/anion cotransporter family. VGLUT subfamily. In terms of assembly, interacts with SHANK3.

The protein localises to the cytoplasmic vesicle. The protein resides in the secretory vesicle. It localises to the synaptic vesicle membrane. Its subcellular location is the cell membrane. It is found in the synapse. The protein localises to the synaptosome. It catalyses the reaction L-glutamate(out) = L-glutamate(in). It carries out the reaction chloride(in) = chloride(out). The enzyme catalyses 3 Na(+)(out) + phosphate(out) = 3 Na(+)(in) + phosphate(in). The catalysed reaction is phosphate(in) = phosphate(out). It catalyses the reaction K(+)(in) + H(+)(out) = K(+)(out) + H(+)(in). With respect to regulation, chloride channel activity is allosterically activated by lumenal H(+) and Cl(-) leading to synaptic vesicles acidification. The L-glutamate transport activity is allosterically activated by lumenal H(+) and Cl(-). The allosteric activation by H(+) efficiently prevents non-vesicular efflux across the plasma membrane, thereby restricting L-glutamate transport activity to acidic membranes such as synaptic vesicles. Multifunctional transporter that transports L-glutamate as well as multiple ions such as chloride, proton, potassium, sodium and phosphate. At the synaptic vesicle membrane, mainly functions as an uniporter which transports preferentially L-glutamate but also phosphate from the cytoplasm into synaptic vesicles at presynaptic nerve terminals of excitatory neural cells. The L-glutamate or phosphate uniporter activity is electrogenic and is driven by the proton electrochemical gradient, mainly by the electrical gradient established by the vacuolar H(+)-ATPase across the synaptic vesicle membrane. In addition, functions as a chloride channel that allows a chloride permeation through the synaptic vesicle membrane that affects the proton electrochemical gradient and promotes synaptic vesicles acidification. Moreover, may function as a K(+)/H(+) antiport allowing to maintain the electrical gradient and to decrease chemical gradient and therefore sustain vesicular glutamate uptake. The vesicular K(+)/H(+) antiport activity is electroneutral. At the plasma membrane, following exocytosis, functions as a symporter of Na(+) and phosphate from the extracellular space to the cytoplasm allowing synaptic phosphate homeostasis regulation. The symporter activity is driven by an inside negative membrane potential and is electrogenic. Is necessary for synaptic signaling of visual-evoked responses from photoreceptors. This chain is Vesicular glutamate transporter 1, found in Bos taurus (Bovine).